The sequence spans 557 residues: Inositol-3-phosphate synthase 1 (557 aa).

21 residues coordinate NAD(+): G67, G68, N69, N70, D141, S177, V178, Q188, R191, T228, A229, N230, T231, G278, S279, D303, S306, N337, N338, D339, and K352. At S279 the chain carries Phosphoserine. S357 is subject to Phosphoserine. NAD(+) contacts are provided by G390, D391, D419, and S420. Residues 514 to 557 are disordered; that stretch reads GIKPEEVKATSPLPCKKESTPATNGCTGDANGHTQAPTPELSTA. S524 is modified (phosphoserine). Over residues 533–557 the composition is skewed to polar residues; sequence TPATNGCTGDANGHTQAPTPELSTA.

Belongs to the myo-inositol 1-phosphate synthase family. In terms of assembly, homotrimer. NAD(+) is required as a cofactor. In terms of processing, phosphorylation at Ser-524 does not appear to affect enzyme activity, and is detected in brain and testis. As to expression, expressed in testis, brain and epididymis (at protein level). Moderately expressed in brain, lung, liver, and kidney. Low expression in heart and spleen. Very low expression in skeletal muscle. Expressed in testis, spleen, heart, brainstem, hippocampus, cerebellum, cortex and amygdala. Absent or very lowly expressed in intestine, lung and muscle. In terms of tissue distribution, expressed in intestine, lung, liver, muscle, testis, spleen, brainstem, hippocampus, cerebellum, cortex and amygdala. Absent or lowly expressed in heart and kidney. As to expression, expressed in intestine (at protein level).

It localises to the cytoplasm. The catalysed reaction is D-glucose 6-phosphate = 1D-myo-inositol 3-phosphate. Its pathway is polyol metabolism; myo-inositol biosynthesis; myo-inositol from D-glucose 6-phosphate: step 1/2. With respect to regulation, inhibited by 2-deoxyglucitol 6-phosphate (dgtolP) and 2-deoxy-D-glucose 6-phosphate. Inhibited by copper, mercury, cadmium, zinc and copper ions. Activated by potassium and ammonium ions. In terms of biological role, key enzyme in myo-inositol biosynthesis pathway that catalyzes the conversion of glucose 6-phosphate to 1-myo-inositol 1-phosphate in a NAD-dependent manner. Rate-limiting enzyme in the synthesis of all inositol-containing compounds. Functionally, key enzyme in myo-inositol biosynthesis pathway that catalyzes the conversion of glucose 6-phosphate to 1-myo-inositol 1-phosphate in a NAD-dependent manner. Competitively inhibits the function of isoform 1, presumably by competing for NAD cofactor. The chain is Inositol-3-phosphate synthase 1 (Isyna1) from Rattus norvegicus (Rat).